A 224-amino-acid chain; its full sequence is DNA mismatch repair protein MutH (224 aa).

The protein belongs to the MutH family.

The protein resides in the cytoplasm. Sequence-specific endonuclease that cleaves unmethylated GATC sequences. It is involved in DNA mismatch repair. The polypeptide is DNA mismatch repair protein MutH (Shewanella amazonensis (strain ATCC BAA-1098 / SB2B)).